A 172-amino-acid polypeptide reads, in one-letter code: Protein CapG (172 aa).

It belongs to the transferase hexapeptide repeat family.

Its pathway is capsule biogenesis; capsule polysaccharide biosynthesis. Its function is as follows. Required for the biosynthesis of type 1 capsular polysaccharide. This chain is Protein CapG (capG), found in Staphylococcus aureus.